Reading from the N-terminus, the 162-residue chain is Large ribosomal subunit protein uL15 (162 aa).

The disordered stretch occupies residues 1–44 (MKLNELRDNPGATKNRIRVGRGIGSGKGKTAGRGVKGQKSREGV). The segment covering 21–35 (RGIGSGKGKTAGRGV) has biased composition (gly residues).

This sequence belongs to the universal ribosomal protein uL15 family. In terms of assembly, part of the 50S ribosomal subunit.

In terms of biological role, binds to the 23S rRNA. This is Large ribosomal subunit protein uL15 from Rhodospirillum rubrum (strain ATCC 11170 / ATH 1.1.1 / DSM 467 / LMG 4362 / NCIMB 8255 / S1).